The sequence spans 574 residues: Septation ring formation regulator EzrA (574 aa).

The Extracellular segment spans residues 1–7 (MSSGIIL). Residues 8–26 (LIVAIVLLVIIAYLVGVII) form a helical membrane-spanning segment. At 27-574 (RKRNDSLITS…YEKTREHIRF (548 aa)) the chain is on the cytoplasmic side. Coiled-coil stretches lie at residues 102 to 141 (NFIR…EEKN), 274 to 350 (ELVT…ETES), and 459 to 520 (QLEA…SFEA).

This sequence belongs to the EzrA family.

The protein resides in the cell membrane. Functionally, negative regulator of FtsZ ring formation; modulates the frequency and position of FtsZ ring formation. Inhibits FtsZ ring formation at polar sites. Interacts either with FtsZ or with one of its binding partners to promote depolymerization. The polypeptide is Septation ring formation regulator EzrA (Streptococcus pyogenes serotype M1).